A 208-amino-acid polypeptide reads, in one-letter code: Redox-sensing transcriptional repressor Rex (208 aa).

The segment at residues 16–55 (LYYRCLSELNEKGEDKVSSAVLERLLKIDAATVRRDFSYF) is a DNA-binding region (H-T-H motif). 90-95 (GVGNLG) contributes to the NAD(+) binding site.

Belongs to the transcriptional regulatory Rex family. Homodimer.

Its subcellular location is the cytoplasm. Its function is as follows. Modulates transcription in response to changes in cellular NADH/NAD(+) redox state. In Pediococcus pentosaceus (strain ATCC 25745 / CCUG 21536 / LMG 10740 / 183-1w), this protein is Redox-sensing transcriptional repressor Rex.